A 715-amino-acid polypeptide reads, in one-letter code: Methionine--tRNA ligase (715 aa).

The 'HIGH' region signature appears at 17 to 27 (PYANGPIHLGH). Residues cysteine 148, cysteine 151, cysteine 161, and cysteine 164 each coordinate Zn(2+). A 'KMSKS' region motif is present at residues 359 to 363 (KMSKS). Lysine 362 contacts ATP. The tRNA-binding domain maps to 614-715 (DLSKVELRVG…KDAKPGDRLK (102 aa)).

Belongs to the class-I aminoacyl-tRNA synthetase family. MetG type 1 subfamily. As to quaternary structure, homodimer. The cofactor is Zn(2+).

Its subcellular location is the cytoplasm. It carries out the reaction tRNA(Met) + L-methionine + ATP = L-methionyl-tRNA(Met) + AMP + diphosphate. Is required not only for elongation of protein synthesis but also for the initiation of all mRNA translation through initiator tRNA(fMet) aminoacylation. The protein is Methionine--tRNA ligase of Leptospira interrogans serogroup Icterohaemorrhagiae serovar copenhageni (strain Fiocruz L1-130).